The following is a 3431-amino-acid chain: MASERPEPEVEEAGQVFLLMKKDYRISRNVRLAWFLNHLHQTVQATPQELLLQSEQELEVLSVLPPGWQPDEPVVPRPFLLVPSTRVTFLAWQYRFVIELDLSPSTGIVDDSTGEILFDEVFHALSRCLGGLLRPFRVPGSCINFQPEIYVTIQAYSSIIGLQSHQVLVQGCLLDPSQREAFLQQVYEQLCLFEDKVATMLQQQYEPQGQAEDQSPESGESLGRKVGVSMVTADLGLVSMIRQGILALQLLPSNSSAGIIVITDGVTSVPDVAVCETLLNQLRSGTVACSFVQVGGVYSYDCSFGHVPNVELMKFIAMATFGSYLSTCPETEPGNLGLTVYHRAFLLYSFLRSGEALNPEYYCGSQHRLFNEHLVSASSNPALALRRKKHTEKEVPADLVSTVSVRLREGYSVREVTLAKGGSQLEVKLVLLWKHNMRIEYVAVAPWPLEPEGPRGTRVEVTMEGGYDILHDVSCALRQPIRSLYRTHVIRRFWNTLQSINQTDQMLAHLQSFSSVPEHFTLPDSTKSGVPLFYIPPGSSTPVLSLQHSGSDSSHAQFAAYWKPVLSMDANSWQRWLHMHRLVLILEHDTPLPKHLHTPGSNGRYSTIQCRISHSSLTSLLRDWSSFVLVEGYSYVKLLSSAPDQPPSSFYMVRIISKTPCMVLRLGFPIGTPAQARHKIVSGLKEEILRLRFPHRVQSKEPTPKVKRKGLGGVGGSSPSKSPPTLGPQQALSDRPCLVVLHKPLDKLLIRYEKLPLDYRAPFLLTLEPPGPLPLVSGRSASSSLASLSRYLYHRRWLWSVPSGLAPTLPLSATAQLLSVLTEVRLSEGFHFACSGEGIINMVLELPVQNEPLGQAAAEEKHTCVVQYILFPPHSTSTKDSFSTDDDNDVEVEALEGDSELNLVTEVWVEPQYGRVGPGPENWKHLQDLTYSEIPQALHPRDAACIGSLLTFEYLIQLCQSKEWGPLPPEPRLSDGLDQRGDTCVHEIPFHFDLLGLLPQCQQLQMFFLLLSREPEGVPLAEGPCPTNDMVLCLLHSCLGQELSDREIPLTPADQAAFLNEVLRRSLRDPGPEGPPVGGHAVAKDRAGNSTQASGDSTLPSQSVVIPGVLRSSISAQPPQWHCYARLLGPQHVFLTFLPATFSDVQHLTAYGLESSFQEETKPKLGDWSGAPSLKDPGATGTKATESQVPTLSVTLASDSAQDSGEPSTPSCQDLAANSGRQAPQTEGADGPRTRCPVYIYSCSLEALREQMVGLQPPQAPRDLIFRAQDLDHPSSSSAWMEPRCKEAATHCALLQEHAQRCFVRGLFRSLQQAQSVTCQDLLTAVDACEELLQEIDITSFLLALCGHTWGLPHAPPSPGPLSPGPFSSSIEEGPEPRERAILVSESSIETEDLSEPEFQSSRVSGNLDPGPEISLTDVCQLRGEAHDALHSLIQEKFLEISRLHFRTVPSNPHYFFYCPPSSRREDEGPRDTVDRKISDLEFSEAELVGEEGDTSACCVVTESDPELEVEYRESREPDLGPAGLDSASLSDADTVNPDEDSFSILGGDSPTGPDSLMHDLPPLFLHLTCSVRLRGQHSSVPVCSLPTCLGQVLSSLEGPPIGGRVPLRDLSITLDVFVLTLPLEVELPPASDPQHHRSTSESSASFPRSPGQPSSLRSDDGLGPPLPPPEEERHPGLSSLAMPHRLAIESTMNEIRWLLEDEMVGALRRGGIPQSPALHRAAAHIHSSSGRPTCLRQAPPLSFVFGPERSLTQFKEEFRRLHLPGHVLLEDPDSGFFFVAAGQQPGVLHGEPPSAAWAWHNHEDRAEDAEGEVLTASPQVPGSLEDSEGTPLISLPSLSQGGSQPGPSRGLSLMSSQGSVDSDHLGYDGGSSGSDSEGPGETLGEKALFTLRTPPGPAPPQPSLPVLPGPSLPDFWLIVRILQDRVEVYAHARSLSREDGGPGAECRHLQQFLVRRVGEICREVNQRLLLQDLHDSHVCNSLLVAESEEDLWRSETPFHSRQRAVLPSDDFAADESCAPRGYLAATMQFVPGHFSCDVVWGTVIRVHSRLKMGPSMGVSRAIQALRSVLNAFSVVNRKNMFVYQERATKAVYYLRLLETSCSDRPWEGDTLPPSLALSRSQEPISSEDSVAPRSPLDMASSRSSDAVRPVGQVDRHIQLLVHGVGQAGPEITDELVRVLRRRLDEATLDIITVMLVRNCKLTPADVEFIQPPGSLPSEVLHLVLPPSCRPCLPALAWYLRQNLLTFLHSPKYTDSNSRNHFQHPLPAQGGLPDLDIYLYNKPGGQGTGGKGVACITLAFVEEGGTPISLASWPPSSPGPPDPLREEEFEQLTQVIRCPNTLDSCSAQDGSPRLRLDVWEKGNISIVQLEEKLRAAARQALADAIMELRLLPASLCTEDIPPGSLKSGPLDTKSPACRANTFPCTPVSGEPVTPPSKAGRRSFWDMLSKTEAGDLGSPKTTDDIVLDRPEDTRGRRRHKTENVRTPGGSERAPGPDSGAQRQRRRTTQLEEGEVGTLHPVFARVIQRWMGFMVQIGCASVSRSSTHMVSRFLLPSILSEFTTLVISMAGDTSVRVFEQHLGSEPDVFSPCSPGQLGPAPRPAAQRHLLLLGRNFAQWRRPTQQAAKAVQRFESGGDGSPGRSAPRQRLLLLEVTDKKLQLLTYNWAPDLGAALGRALIRLVQWQNARAHLISCLLSQKLGLFHHCGQLDFPMRDGKEPNPFLLPTMEVETLIRNASPPLSREQGRLSGSSRGGGPLSLDTFPFDEALRDITAARPSSTGGPAPRPPDPVTYHGQQFLEIKMTERKELERQMKMENLFVTWQQRSAPASMPISAGELETLKQSSRLVHYCATALLFDPAAWLHGPPETCAPSEGQRRPCPESGSGSREVPTSCESLDVPPPGAREEPWLKELSLAFLQQYVQYLQSIGFVLVPLRPPSPARSTSRLRAMAILGTEGRGSFSCPKAKAEGSPKSTSTPVTTYHLQRALPGGIILMELTFQGCYFCVKQFALECSRIPMGQAVNSQLSLLFTEECDKVRDLMHVHSFSYDFHLRLVHQHVLGAHLALRHGYHLTTFLQHFLAHHPDGPHFGRNHIYQGTLELPTPLIAAHQLYNYVADHASSYHMKPLRMARPGGPEHNEYALVSAWHSSGSYLDSEGLRHQDDFDVSLLVCHSAAPFEEQGEAERHVLRLQFFVVLTSQRELFPRLTADMRRFRKPSRLPLEPETPGSLVGSPREASGMMLAPGPAPLFPPLAAEVGMARARLAQLVRLAGGHCRRDTLWKRLFLLEPPGPDRLRLGGRLALAELEELLEAVHAKSIADIDPQLDCFLSMTVSWYQSLIKVLLSRFPQSCRHFQSPDLGTQYLVVLNQKFTDCFVLVFLDSHLGKTSLTVVFREPFPVQPQDSESPPAQLVSTYHHLESVINTACFTLWTRLL.

Disordered regions lie at residues serine 699–alanine 731, leucine 1067–serine 1101, and lysine 1162–glycine 1231. The mediates interaction with the GATOR1 complex stretch occupies residues valine 1082–glutamine 1188. Polar residues-rich tracts occupy residues glycine 1088–serine 1101 and threonine 1182–cysteine 1212. Serine 1275 is subject to Phosphoserine. A disordered region spans residues proline 1356 to arginine 1378. Serine 1415 carries the phosphoserine modification. Disordered regions lie at residues tyrosine 1512–aspartate 1534, proline 1629–leucine 1678, arginine 1806–threonine 1883, proline 2113–valine 2148, threonine 2450–glycine 2512, alanine 2735–leucine 2756, and glutamate 2866–proline 2899. Threonine 1640 carries the post-translational modification Phosphothreonine. Over residues serine 1641–leucine 1657 the composition is skewed to polar residues. A Phosphoserine modification is found at serine 1650. Residues proline 1832 to leucine 1854 show a composition bias toward low complexity. Positions leucine 2118–aspartate 2129 are enriched in polar residues. The span at threonine 2460–arginine 2473 shows a compositional bias: basic and acidic residues. Over residues leucine 2739–serine 2749 the composition is skewed to low complexity.

In terms of assembly, part of the KICSTOR complex composed of KPTN, ITFG2, KICS2 and SZT2. SZT2 probably serves as a link between the other three proteins in the KICSTOR complex and may mediate the direct interaction with the GATOR complex via GATOR1. The KICSTOR complex interacts directly with the GATOR1 complex and most probably indirectly with the GATOR2 complex in an amino acid-independent manner. Mostly expressed in brain, spinal cord and lung.

Its subcellular location is the lysosome membrane. It is found in the peroxisome. Functionally, as part of the KICSTOR complex functions in the amino acid-sensing branch of the TORC1 signaling pathway. Recruits, in an amino acid-independent manner, the GATOR1 complex to the lysosomal membranes and allows its interaction with GATOR2 and the RAG GTPases. Functions upstream of the RAG GTPases and is required to negatively regulate mTORC1 signaling in absence of amino acids. In absence of the KICSTOR complex mTORC1 is constitutively localized to the lysosome and activated. The KICSTOR complex is also probably involved in the regulation of mTORC1 by glucose. May play a role in the cellular response to oxidative stress. This chain is KICSTOR complex protein SZT2, found in Mus musculus (Mouse).